A 140-amino-acid polypeptide reads, in one-letter code: Nucleoside diphosphate kinase (140 aa).

Residues K11, F59, R87, T93, R104, and N114 each coordinate ATP. H117 functions as the Pros-phosphohistidine intermediate in the catalytic mechanism.

The protein belongs to the NDK family. As to quaternary structure, homotetramer. Mg(2+) serves as cofactor.

The protein resides in the cytoplasm. It catalyses the reaction a 2'-deoxyribonucleoside 5'-diphosphate + ATP = a 2'-deoxyribonucleoside 5'-triphosphate + ADP. It carries out the reaction a ribonucleoside 5'-diphosphate + ATP = a ribonucleoside 5'-triphosphate + ADP. Its function is as follows. Major role in the synthesis of nucleoside triphosphates other than ATP. The ATP gamma phosphate is transferred to the NDP beta phosphate via a ping-pong mechanism, using a phosphorylated active-site intermediate. The protein is Nucleoside diphosphate kinase of Rhodopseudomonas palustris (strain BisA53).